A 940-amino-acid chain; its full sequence is MSDYKFTLNLPETEFPMRGNLANREPEMLERWTKDGLYQQIRDSRIGRTPFILHDGPPYANGSIHIGHSVNKILKDIIVKSKTMSGFDAPYVPGWDCHGLPIELKVEQKVGKPGQKISAAEFREECRKYAAEQVDGQRADFIRLGVLGDWQKPYLTMDFATEANIVRSLSKVIENGHLHKGVKPVHWCTDCGSALAEAEVEYEDKTSPAIDVAFTATDSKALAAQFGVSDYSHPVAMVIWTTTPWTLPANRALSISPELDYSLVEFVKDGATHAVILADVLVEACMTRYGAESHNVLGKVKGAALELVRFKHPFLAFDVPAILGDHVTTDAGTGVVHTAPGHGQDDFVVGQKYGLEVANPVGDNGVYKPDTEFFAGQHVFKANDNVVALLKEKGALLHHVAYRHSYPHCWRHKTPIIFRATPQWFISMDNQNLRKQALSEIEQTQWIPDWGQSRIEKMVENRPDWCISRQRTWGVPITLFVHRETEELHPDSVSLMARVANRIEQEGIQAWWDLDAAELLGEEAEQYRKVTDTLDVWYDSGSTFASVVGARPEFHGHGVDLYLEGSDQHRGWFMSSLMISTAMTGKAPYKQVLTHGFTVDGKGRKMSKSIGNVIAPQQVTNKLGADILRLWVAATDYSGEMTVSDEILNRSADAYRRIRNTARFLLANLNGFDPAKDLVAVEDMVALDRWAVRRAAALQQEIIEAYEQYNFHIVTQKLMQFCSVELGSFYLDIIKDRQYTAKQEGHARRSCQSALFHIAEAMVRWIAPILSFTADEVWQLLPGQRDAYVFTQEWYQDLQSITLDTDLSDAYWDNLLTVRNEVNKVIEQARRDKRIGGSLEAEVTLFADAALTEQLTHIGDELRFVLLTSEAKVLPLADATSDAVETELASLKLVVNATTAEKCERCWHHREEVGTIEAHPTLCHRCVTNIEGDGEVRLFA.

Residues 58-68 (PYANGSIHIGH) carry the 'HIGH' region motif. Glu564 contacts L-isoleucyl-5'-AMP. The short motif at 605 to 609 (KMSKS) is the 'KMSKS' region element. Lys608 provides a ligand contact to ATP. Cys903, Cys906, Cys923, and Cys926 together coordinate Zn(2+).

Belongs to the class-I aminoacyl-tRNA synthetase family. IleS type 1 subfamily. Monomer. The cofactor is Zn(2+).

The protein localises to the cytoplasm. It catalyses the reaction tRNA(Ile) + L-isoleucine + ATP = L-isoleucyl-tRNA(Ile) + AMP + diphosphate. Functionally, catalyzes the attachment of isoleucine to tRNA(Ile). As IleRS can inadvertently accommodate and process structurally similar amino acids such as valine, to avoid such errors it has two additional distinct tRNA(Ile)-dependent editing activities. One activity is designated as 'pretransfer' editing and involves the hydrolysis of activated Val-AMP. The other activity is designated 'posttransfer' editing and involves deacylation of mischarged Val-tRNA(Ile). In Shewanella sp. (strain MR-7), this protein is Isoleucine--tRNA ligase.